Reading from the N-terminus, the 518-residue chain is Glutamate--cysteine ligase (518 aa).

This sequence belongs to the glutamate--cysteine ligase type 1 family. Type 1 subfamily.

It carries out the reaction L-cysteine + L-glutamate + ATP = gamma-L-glutamyl-L-cysteine + ADP + phosphate + H(+). Its pathway is sulfur metabolism; glutathione biosynthesis; glutathione from L-cysteine and L-glutamate: step 1/2. This chain is Glutamate--cysteine ligase, found in Shigella boydii serotype 4 (strain Sb227).